A 106-amino-acid polypeptide reads, in one-letter code: Hydrogenase expression/formation protein HoxL (106 aa).

The protein belongs to the HupF/HypC family.

The polypeptide is Hydrogenase expression/formation protein HoxL (hoxL) (Azotobacter vinelandii).